Consider the following 1159-residue polypeptide: MSDPKFIHLRIHSDFSMVDGLSKVPPLVKKVAAMGMPAMALTDFTNLCGLVKFYSTAHNCGVKPIIGADFTLQSEEFGDELTKLTLLAKNNVGYKNLTLLISKAYLRGHVQHQPVIDKAWLVEHAEGLIVLSGGKSGEVGRALLKGNQQQVERCIEFYQTHFADHFYLELIRTGRADEESYLHFALDVAEQYDLPVVATNEVVFITEESFEAHEIRVAIHDGYTLEDPRRPKNYSPKQYLRSEAEMCELFADIPEALANSVEIAKRCNVTVRLGEYFLPNFPTGGMAIEDFLVMKSREGLEERLEFLFPDPEVRAKRRPEYDERLQVELDVINQMGFPGYFLIVMEFIQWSKDNDIPVGPGRGSGAGSLVAYALKITDLDPLEYDLLFERFLNPERVSMPDFDVDFCMDKRDQVIDHVAEMYGRDAVSQIITFGTMAAKAVIRDVGRVLGHPFGFVDRISKLVPPDPGMTLEKAFIAEPALQELYDADEEVKELIDKCRILEGCTRNAGKHAGGVVISPTAITDFAPIYCDAEGNFPVTQFDKNDVETAGLVKFDFLGLRTLTIIDWALGLVNPRLKKAGKPPVRIEAIPLDDARSFRNLQDAKTTAVFQLESRGMKELIKRLQPDCFEDIIALVALFRPGPLQSGMVDNFIDRKHGREAISYPDEKWQHESLKEILEPTYGIILYQEQVMQIAQVLSGYTLGGADMLRRAMGKKKPEEMAKQRAVFQEGAEKNGVDGELAMKIFDLVEKFAGYGFNKSHSAAYALVSYQTLWLKTHYPAEFMAAVMTADMDNTEKVVGLVDECKNMGLTVLPPDINSGLYRFNVDDNGAIVYGIGAIKGVGEGPIEAILEARNKGGYFKDLFDFCARIDLKKVNKRVIEKLILAGALDRLGPHRAAMMASVDDAVRAASQHHQAEAFGQADMFGVLTDAPEEVEQKYTQVPEWPEKVRLEGERETLGLYLTGHPVDEYLKELTKYTSCRLNEAAPTRRDQSLTVAGLVIAARVMTTKRGTRIGLMTLDDRSGRMEVMLYSEALDRYAEWLEKDKILVVSGQVSFDDFNGGLKMSAREVMDLGSAREKFARGLSISILQSQIDQQFFERFSHILEPHRAGTVPVNVYYQRPDARARLTLGTEWRVTPSDTLLDELKQLLGHDQVELEFN.

This sequence belongs to the DNA polymerase type-C family. DnaE subfamily. DNA polymerase III contains a core (composed of alpha, epsilon and theta chains) that associates with a tau subunit. This core dimerizes to form the PolIII' complex. PolIII' associates with the gamma complex (composed of gamma, delta, delta', psi and chi chains) and with the beta chain to form the complete DNA polymerase III complex.

The protein resides in the cytoplasm. It catalyses the reaction DNA(n) + a 2'-deoxyribonucleoside 5'-triphosphate = DNA(n+1) + diphosphate. In terms of biological role, DNA polymerase III is a complex, multichain enzyme responsible for most of the replicative synthesis in bacteria. This DNA polymerase also exhibits 3' to 5' exonuclease activity. The alpha chain is the DNA polymerase. This chain is DNA polymerase III subunit alpha (dnaE), found in Vibrio cholerae serotype O1 (strain ATCC 39315 / El Tor Inaba N16961).